Here is a 421-residue protein sequence, read N- to C-terminus: Testin (421 aa).

Residues methionine 92–aspartate 199 enclose the PET domain. The interval glutamate 133–cysteine 164 is disordered. The segment covering proline 155–cysteine 164 has biased composition (basic and acidic residues). LIM zinc-binding domains lie at tyrosine 234–glutamate 297, proline 299–valine 359, and glutamine 362–serine 421.

Belongs to the prickle / espinas / testin family. In terms of assembly, interacts via LIM domain 1 with ZYX. Interacts (via LIM domain 3) with ENAH and VASP. Interacts with ALKBH4, talin, actin, alpha-actinin, GRIP1 and PXN. Interacts (via LIM domain 2) with ACTL7A (via N-terminus). Heterodimer with ACTL7A; the heterodimer interacts with ENAH to form a heterotrimer.

It localises to the cytoplasm. The protein resides in the cell junction. Its subcellular location is the focal adhesion. Scaffold protein that may play a role in cell adhesion, cell spreading and in the reorganization of the actin cytoskeleton. Plays a role in the regulation of cell proliferation. May act as a tumor suppressor. The sequence is that of Testin (TES) from Mustela putorius furo (European domestic ferret).